A 330-amino-acid chain; its full sequence is Dimethyladenosine transferase 1, mitochondrial (330 aa).

A mitochondrion-targeting transit peptide spans 1–84; sequence MAQPSARVLQ…RSILRRHPQR (84 aa). S-adenosyl-L-methionine is bound by residues 38-41, Asn39, Leu41, Gly67, Glu89, Asp118, and Asn140; that span reads QNFL.

Belongs to the class I-like SAM-binding methyltransferase superfamily. rRNA adenine N(6)-methyltransferase family. KsgA subfamily.

Its subcellular location is the mitochondrion. Functionally, probable S-adenosyl-L-methionine-dependent methyltransferase which specifically dimethylates mitochondrial 12S rRNA at the conserved stem loop. In contrast to mtTFB2, it does not have a critical role in either transcription or regulation of the copy number of mitochondrial DNA. The polypeptide is Dimethyladenosine transferase 1, mitochondrial (mtTFB1) (Drosophila melanogaster (Fruit fly)).